The sequence spans 1430 residues: Death-associated protein kinase 1 (1430 aa).

Residues 13–275 (YDTGEELGSG…IQDSLQHPWI (263 aa)) enclose the Protein kinase domain. Residues 19–27 (LGSGQFAVV), lysine 42, 94–96 (ELV), and glutamate 100 each bind ATP. The Proton acceptor role is filled by aspartate 139. Aspartate 161 serves as a coordination point for ATP. Residues 267–334 (QDSLQHPWIK…RSNMSVARSD (68 aa)) are calmodulin-binding. A Phosphoserine; by RPS6KA1 and RPS6KA3 modification is found at serine 289. The autoinhibitory domain stretch occupies residues 292-301 (NMEKFKKFAA). Position 308 is a phosphoserine; by autocatalysis (serine 308). Phosphoserine occurs at positions 319 and 333. 8 ANK repeats span residues 378 to 407 (HGTP…RIDV), 411 to 440 (GGSN…PLDV), 444 to 473 (SGEM…NPNI), 477 to 506 (EEET…NVNI), 510 to 539 (EGET…DLNA), 543 to 572 (DGHI…FVDY), 576 to 605 (HGNT…NLDI), and 609 to 638 (YGRT…SVEA). Residues 681–955 (TQNLQPRIKL…NHLQEIRSQI (275 aa)) enclose the Roc domain. Phosphoserine; by MAPK1 is present on serine 734. Residues 875–904 (KLKNPLQVVLVATHADIMNVPRPAGGEFGY) form an ANK 9 repeat. At serine 1115 the chain carries Phosphoserine. One copy of the ANK 10 repeat lies at 1162 to 1196 (EGDADIRLWVNGCKLANRGAELLVLLVNHGQGIEV). The 85-residue stretch at 1312-1396 (KLSRLLDPPD…DAADFLLKAS (85 aa)) folds into the Death domain.

It belongs to the protein kinase superfamily. CAMK Ser/Thr protein kinase family. DAP kinase subfamily. Interacts with KLHL20. Interacts (via death domain) with MAPK1 and MAPK3. Interacts with MAP1B (via N-terminus). Interacts with PRKD1 in an oxidative stress-regulated manner. Interacts with PIN1, PDCD6, BECN1, TSC2 and STX1A. Interacts (via kinase domain) with DAPK3 (via kinase domain). Interacts with GRINB. Interacts (via death domain) with UNC5B (via death domain). Interacts with UNC5C (via death domain). Requires Mg(2+) as cofactor. Ubiquitinated by the BCR(KLHL20) E3 ubiquitin ligase complex, leading to its degradation by the proteasome. In terms of processing, removal of the C-terminal tail of isoform 2 (corresponding to amino acids 296-337 of isoform 2) by proteolytic cleavage stimulates maximally its membrane-blebbing function. Post-translationally, in response to mitogenic stimulation (PMA or EGF), phosphorylated at Ser-289; phosphorylation suppresses DAPK1 pro-apoptotic function. Autophosphorylation at Ser-308 inhibits its catalytic activity. Phosphorylation at Ser-734 by MAPK1 increases its catalytic activity and promotes cytoplasmic retention of MAPK1. Endoplasmic-stress can cause dephosphorylation at Ser-308. In terms of tissue distribution, isoform 2 is expressed in normal intestinal tissue as well as in colorectal carcinomas.

Its subcellular location is the cytoplasm. The protein resides in the cytoskeleton. It carries out the reaction L-seryl-[protein] + ATP = O-phospho-L-seryl-[protein] + ADP + H(+). It catalyses the reaction L-threonyl-[protein] + ATP = O-phospho-L-threonyl-[protein] + ADP + H(+). Its activity is regulated as follows. Activated by Ca(2+)/calmodulin. Regulated by a locking mechanism, involving autophosphorylation at Ser-308 and calmodulin binding. In the inactive state, Ser-308 is phosphorylated. Activation involves its dephosphorylation and a release-of-autoinhibition mechanism where binding of calmodulin induces a conformational change that relieves the steric block of the active site by the autoinhibitory domain. Activity is modulated by UNC5B and NTN1. UNC5B activates it by inhibiting the phosphorylation at Ser-308, whereas NTN1 inhibits UNC5B-mediated activation of DAPK1. Endoplasmic-stress activates by causing Ser-308 dephosphorylation. Functionally, calcium/calmodulin-dependent serine/threonine kinase involved in multiple cellular signaling pathways that trigger cell survival, apoptosis, and autophagy. Regulates both type I apoptotic and type II autophagic cell deaths signal, depending on the cellular setting. The former is caspase-dependent, while the latter is caspase-independent and is characterized by the accumulation of autophagic vesicles. Phosphorylates PIN1 resulting in inhibition of its catalytic activity, nuclear localization, and cellular function. Phosphorylates TPM1, enhancing stress fiber formation in endothelial cells. Phosphorylates STX1A and significantly decreases its binding to STXBP1. Phosphorylates PRKD1 and regulates JNK signaling by binding and activating PRKD1 under oxidative stress. Phosphorylates BECN1, reducing its interaction with BCL2 and BCL2L1 and promoting the induction of autophagy. Phosphorylates TSC2, disrupting the TSC1-TSC2 complex and stimulating mTORC1 activity in a growth factor-dependent pathway. Phosphorylates RPS6, MYL9 and DAPK3. Acts as a signaling amplifier of NMDA receptors at extrasynaptic sites for mediating brain damage in stroke. Cerebral ischemia recruits DAPK1 into the NMDA receptor complex and it phosphorylates GRINB at Ser-1303 inducing injurious Ca(2+) influx through NMDA receptor channels, resulting in an irreversible neuronal death. Required together with DAPK3 for phosphorylation of RPL13A upon interferon-gamma activation which is causing RPL13A involvement in transcript-selective translation inhibition. Isoform 2 cannot induce apoptosis but can induce membrane blebbing. The sequence is that of Death-associated protein kinase 1 (DAPK1) from Homo sapiens (Human).